A 468-amino-acid polypeptide reads, in one-letter code: Ribosomal lysine N-methyltransferase 4 (468 aa).

Residues 22–302 enclose the SET domain; the sequence is EKIGLNDYRH…KGEQLWNTYG (281 aa). The tract at residues 188–225 is disordered; it reads ISNENEKSAAETSIKEDKNGDAAKKNEGSANQDDEKLH. Y301 lines the S-adenosyl-L-methionine pocket.

It belongs to the class V-like SAM-binding methyltransferase superfamily. Histone-lysine methyltransferase family. SETD6 subfamily.

Its subcellular location is the nucleus. Functionally, S-adenosyl-L-methionine-dependent protein-lysine N-methyltransferase that monomethylates 60S ribosomal protein L42 (rpl42) at 'Lys-55'. This Schizosaccharomyces pombe (strain 972 / ATCC 24843) (Fission yeast) protein is Ribosomal lysine N-methyltransferase 4.